The sequence spans 326 residues: Probable 9-O-acetyl-N-acetylneuraminic acid deacetylase (326 aa).

An N-terminal signal peptide occupies residues 1–21; it reads MNAIISPDYYYVLTVAGQSNA.

The protein localises to the periplasm. Probably catalyzes the hydrolysis of the 9-O-acetyl group of 9-O-acetyl-N-acetylneuraminate (Neu5,9Ac2). Is required for growth of E.coli on Neu5,9Ac2, an alternative sialic acid commonly found in mammalian host mucosal sites, in particular in the human intestine. This chain is Probable 9-O-acetyl-N-acetylneuraminic acid deacetylase (nanS), found in Escherichia coli (strain K12).